The sequence spans 191 residues: Protein Ves (191 aa).

Belongs to the Ves family.

This is Protein Ves from Escherichia coli (strain UTI89 / UPEC).